A 260-amino-acid chain; its full sequence is Acyl-[acyl-carrier-protein]--UDP-N-acetylglucosamine O-acyltransferase (260 aa).

This sequence belongs to the transferase hexapeptide repeat family. LpxA subfamily. Homotrimer.

The protein localises to the cytoplasm. It catalyses the reaction a (3R)-hydroxyacyl-[ACP] + UDP-N-acetyl-alpha-D-glucosamine = a UDP-3-O-[(3R)-3-hydroxyacyl]-N-acetyl-alpha-D-glucosamine + holo-[ACP]. It functions in the pathway glycolipid biosynthesis; lipid IV(A) biosynthesis; lipid IV(A) from (3R)-3-hydroxytetradecanoyl-[acyl-carrier-protein] and UDP-N-acetyl-alpha-D-glucosamine: step 1/6. In terms of biological role, involved in the biosynthesis of lipid A, a phosphorylated glycolipid that anchors the lipopolysaccharide to the outer membrane of the cell. In Aliarcobacter butzleri (strain RM4018) (Arcobacter butzleri), this protein is Acyl-[acyl-carrier-protein]--UDP-N-acetylglucosamine O-acyltransferase.